A 1041-amino-acid chain; its full sequence is Sarcoplasmic/endoplasmic reticulum calcium ATPase 2 (1041 aa).

At 1-48 the chain is on the cytoplasmic side; it reads MENAHTKTVEEVLAYFGVNESTGLSLEQVKKLKEKWGSNELPAEEGKT. The helical transmembrane segment at 49 to 69 threads the bilayer; the sequence is LLELVIEQFEDLLVRILLLAA. Residues 70 to 89 lie on the Lumenal side of the membrane; the sequence is CISFVLAWFEEGEETITAFV. The helical transmembrane segment at 90-110 threads the bilayer; it reads EPFVILLILVANAIVGVWQER. Residues 111-253 lie on the Cytoplasmic side of the membrane; the sequence is NAENAIEALK…QERTPLQQKL (143 aa). Residues 254–273 form a helical membrane-spanning segment; that stretch reads DEFGEQLSKVISLICIAVWI. At 274–295 the chain is on the lumenal side; the sequence is INIGHFNDPVHGGSWIRGAIYY. A helical transmembrane segment spans residues 296–313; it reads FKIAVALAVAAIPEGLPA. Ca(2+) contacts are provided by Val-304, Ala-305, Ile-307, and Glu-309. The Cytoplasmic portion of the chain corresponds to 314-756; sequence VITTCLALGT…EEGRAIYNNM (443 aa). The active-site 4-aspartylphosphate intermediate is Asp-351. Residues Asp-351 and Thr-353 each contribute to the Mg(2+) site. ATP-binding residues include Thr-353, Glu-442, Arg-489, Lys-514, Arg-559, Thr-624, Gly-625, Asp-626, Arg-677, and Lys-683. Asp-702 contributes to the Mg(2+) binding site. Asn-705 is a binding site for ATP. Residues 757–776 form a helical membrane-spanning segment; it reads KQFIRYLISSNVGEVVCIFL. Ca(2+)-binding residues include Asn-767 and Glu-770. The Lumenal segment spans residues 777-786; it reads TAALGFPEAL. Residues 787–807 traverse the membrane as a helical segment; that stretch reads IPVQLLWVNLVTDGLPATALG. The interaction with PLN stretch occupies residues 787 to 807; it reads IPVQLLWVNLVTDGLPATALG. 3 residues coordinate Ca(2+): Asn-795, Thr-798, and Asp-799. The Cytoplasmic portion of the chain corresponds to 808–827; it reads FNPPDLDIMNKPPRNPKEPL. A helical transmembrane segment spans residues 828–850; the sequence is ISGWLFFRYLAIGCYVGAATVGA. Over 851–896 the chain is Lumenal; it reads AAWWFIAADGGPRVTFYQLSHFLQCKEDNPDFSGVDCVVFESPYPM. Cysteines 875 and 887 form a disulfide. The helical transmembrane segment at 897–916 threads the bilayer; it reads TMALSVLVTIEMCNALNSLS. Glu-907 contributes to the Ca(2+) binding site. Residues 917–929 lie on the Cytoplasmic side of the membrane; sequence ENQSLMRMPPWEN. A helical transmembrane segment spans residues 930–948; it reads IWLVGAICLSMSLHFLILY. The interval 931-942 is interaction with PLN; the sequence is WLVGAICLSMSL. Residues 949 to 963 lie on the Lumenal side of the membrane; that stretch reads VEPLPIIFQITPLNV. A helical transmembrane segment spans residues 964 to 984; that stretch reads TQWLMVLKISLPVILLDETLK. Residues 985–1041 lie on the Cytoplasmic side of the membrane; the sequence is YVARNYLEPGKDSVQPATKPCSLSACTEGVSWPFVFITLPLVIWLYSTDTNFSDMFW.

The protein belongs to the cation transport ATPase (P-type) (TC 3.A.3) family. Type IIA subfamily. As to quaternary structure, interacts with sarcolipin (SLN). Interacts with phospholamban (PLN). Interacts with myoregulin (MRLN). Interacts with DWORF. Interacts with TMX2. It depends on Mg(2+) as a cofactor. In terms of tissue distribution, only isoform 2 is detected in heart, while both isoforms are expressed in brain, with isoform 2 being predominant.

It localises to the endoplasmic reticulum membrane. The protein localises to the sarcoplasmic reticulum membrane. The catalysed reaction is Ca(2+)(in) + ATP + H2O = Ca(2+)(out) + ADP + phosphate + H(+). Reversibly inhibited by phospholamban (PLN) at low calcium concentrations. Inhibited by sarcolipin (SLN) and myoregulin (MRLN). Enhanced by DWORF; DWORF increases activity by displacing sarcolipin (SLN), phospholamban (PLN) and myoregulin (MRLN). This magnesium-dependent enzyme catalyzes the hydrolysis of ATP coupled with the translocation of calcium from the cytosol to the sarcoplasmic reticulum lumen. Isoform SERCA2A is involved in the regulation of the contraction/relaxation cycle. May act as a regulator of TNFSF11-mediated Ca(2+) signaling during osteoclastogenesis. This chain is Sarcoplasmic/endoplasmic reticulum calcium ATPase 2 (ATP2A2), found in Gallus gallus (Chicken).